Reading from the N-terminus, the 269-residue chain is Protein tio (269 aa).

Positions M1–K12 are enriched in basic and acidic residues. Positions M1–N127 are disordered. At M1–C246 the chain is on the cytoplasmic side. Over residues P27–P41 the composition is skewed to pro residues. Positions S61 to P74 are enriched in low complexity. Polar residues-rich tracts occupy residues S91–N101 and A114–N127. The residue at position 136 (Y136) is a Phosphotyrosine; by host LCK. A CSKH/LBD2 region spans residues E158–Y167. The SH3B/LBD1 stretch occupies residues I186–P195. The helical transmembrane segment at L247–L267 threads the bilayer. Over M268–K269 the chain is Extracellular.

In terms of assembly, homodimer. Binds SH3 domain of host LYN, HCK, LCK, SRC, FYN or YES. When tyrosine-phosphorylated, binds to the SH2 domain of host LCK, SRC, or FYN. Phosphorylated by host LCK, SRC and less efficiently by FYN.

Its subcellular location is the host cell membrane. Functionally, transforms host T-cells, inducing T-cell lymphomia in the host. Activates at least SRC and LCK tyrosines kinases, thereby activating signaling pathway transforming host T-cells. Human T-cells transformed ex vivo display a IL2 indenpendent growth phenotype. The polypeptide is Protein tio (Ateles (AtHV-3)).